Consider the following 230-residue polypeptide: MDLLFASTNPGKLKELRRLVAGLPIRVVSPDELPRALPEVEEDGATFQANAEKKASTYARLAGMAALADDSGLAVDALGGAPGVRSARWSDEEPGPAPASPVCDLAEAAAAELGPVAGRGARDERNNDKLLRSLAGLPDERRGAQYEAVLAVARADGSLVASVAGVCRGRIGHARRGTGGFGYDPLFVPDGQGGRTMAELSAEEKDAISHRGDAFRRIRSLLERLAREGA.

Residue 7–12 (STNPGK) coordinates substrate. E41 and D70 together coordinate Mg(2+). The active-site Proton acceptor is D70. Substrate contacts are provided by residues S71, 181-184 (FGYD), K205, and 210-211 (HR).

It belongs to the HAM1 NTPase family. Homodimer. The cofactor is Mg(2+).

It carries out the reaction XTP + H2O = XMP + diphosphate + H(+). It catalyses the reaction dITP + H2O = dIMP + diphosphate + H(+). The catalysed reaction is ITP + H2O = IMP + diphosphate + H(+). Its function is as follows. Pyrophosphatase that catalyzes the hydrolysis of nucleoside triphosphates to their monophosphate derivatives, with a high preference for the non-canonical purine nucleotides XTP (xanthosine triphosphate), dITP (deoxyinosine triphosphate) and ITP. Seems to function as a house-cleaning enzyme that removes non-canonical purine nucleotides from the nucleotide pool, thus preventing their incorporation into DNA/RNA and avoiding chromosomal lesions. This is dITP/XTP pyrophosphatase from Anaeromyxobacter sp. (strain Fw109-5).